A 61-amino-acid polypeptide reads, in one-letter code: uncharacterized protein (61 aa).

The protein belongs to the DUP/COS family.

This is an uncharacterized protein from Saccharomyces cerevisiae (strain ATCC 204508 / S288c) (Baker's yeast).